The sequence spans 270 residues: NAD(P)H-hydrate epimerase (270 aa).

In terms of domain architecture, YjeF N-terminal spans 25–234; the sequence is FQQLMDLMQN…DLLAPEAIYQ (210 aa). 73 to 77 is a binding site for (6S)-NADPHX; that stretch reads DNGGQ. Residues Asn74 and Asp144 each contribute to the K(+) site. (6S)-NADPHX-binding positions include 148–154 and Glu177; that span reads GVGLYGH. Residue Thr180 coordinates K(+).

It belongs to the NnrE/AIBP family. Requires K(+) as cofactor.

It catalyses the reaction (6R)-NADHX = (6S)-NADHX. It carries out the reaction (6R)-NADPHX = (6S)-NADPHX. Catalyzes the epimerization of the S- and R-forms of NAD(P)HX, a damaged form of NAD(P)H that is a result of enzymatic or heat-dependent hydration. This is a prerequisite for the S-specific NAD(P)H-hydrate dehydratase to allow the repair of both epimers of NAD(P)HX. This is NAD(P)H-hydrate epimerase from Legionella pneumophila subsp. pneumophila (strain Philadelphia 1 / ATCC 33152 / DSM 7513).